Consider the following 261-residue polypeptide: Ribosomal RNA small subunit methyltransferase A (261 aa).

S-adenosyl-L-methionine contacts are provided by Asn-15, Ile-17, Gly-42, Glu-64, Asp-90, and Asn-109.

The protein belongs to the class I-like SAM-binding methyltransferase superfamily. rRNA adenine N(6)-methyltransferase family. RsmA subfamily.

The protein localises to the cytoplasm. The enzyme catalyses adenosine(1518)/adenosine(1519) in 16S rRNA + 4 S-adenosyl-L-methionine = N(6)-dimethyladenosine(1518)/N(6)-dimethyladenosine(1519) in 16S rRNA + 4 S-adenosyl-L-homocysteine + 4 H(+). Functionally, specifically dimethylates two adjacent adenosines (A1518 and A1519) in the loop of a conserved hairpin near the 3'-end of 16S rRNA in the 30S particle. May play a critical role in biogenesis of 30S subunits. The chain is Ribosomal RNA small subunit methyltransferase A from Wolbachia sp. subsp. Brugia malayi (strain TRS).